Reading from the N-terminus, the 190-residue chain is CASP-like protein 2U2 (190 aa).

The Cytoplasmic portion of the chain corresponds to 1-10; it reads MGEKMQGFQG. The helical transmembrane segment at 11 to 31 threads the bilayer; that stretch reads WSIGIRFLTSCVSIASLILLL. Residues 32–59 are Extracellular-facing; that stretch reads KSKQTVQVSVGLDYVTQQVKYSDTSAFV. A helical membrane pass occupies residues 60-80; the sequence is YLVFSDILVAVYCIVVLVGLI. The Cytoplasmic portion of the chain corresponds to 81-94; that stretch reads PAALGKSHPGKAGQ. Residues 95 to 115 traverse the membrane as a helical segment; the sequence is WAIFIFDQVLAYVLLAAASSA. The Extracellular segment spans residues 116 to 144; that stretch reads TEVAYLADKGMAKTSWEAVCPRFAHFCHT. Residues 145-165 traverse the membrane as a helical segment; that stretch reads VMASISLSFVAVLLLALLAVV. At 166-190 the chain is on the cytoplasmic side; that stretch reads SASGLFGRFYRRPLFAVKMRHNTLI.

It belongs to the Casparian strip membrane proteins (CASP) family. Homodimer and heterodimers.

Its subcellular location is the cell membrane. The chain is CASP-like protein 2U2 from Pteridium aquilinum subsp. aquilinum (Bracken fern).